A 599-amino-acid chain; its full sequence is Elongation factor 4 (599 aa).

Positions 2–184 (KNIRNFSIIA…EIVAKIPAPK (183 aa)) constitute a tr-type G domain. Residues 14 to 19 (DHGKST) and 131 to 134 (NKID) contribute to the GTP site.

Belongs to the TRAFAC class translation factor GTPase superfamily. Classic translation factor GTPase family. LepA subfamily.

It is found in the cell inner membrane. The enzyme catalyses GTP + H2O = GDP + phosphate + H(+). In terms of biological role, required for accurate and efficient protein synthesis under certain stress conditions. May act as a fidelity factor of the translation reaction, by catalyzing a one-codon backward translocation of tRNAs on improperly translocated ribosomes. Back-translocation proceeds from a post-translocation (POST) complex to a pre-translocation (PRE) complex, thus giving elongation factor G a second chance to translocate the tRNAs correctly. Binds to ribosomes in a GTP-dependent manner. This Mannheimia succiniciproducens (strain KCTC 0769BP / MBEL55E) protein is Elongation factor 4.